A 905-amino-acid polypeptide reads, in one-letter code: MPGKLRVHELAKQLGVTSKELLATLKEQGEFVKTASSTIEPPVIKKMRAHYEAKGGEDKAAEKNAPAATPASASKKPTEKKPATAAKPGPKPSAAPKPGAAPKPGGAPKPGGAPKPGATPKPGGAPKPGAQRKNTEKGSERAVTPRSMPKPGGTRRVANNPFSTGSSSDRPSPGPRPGGTKGQRSAGKPGDNRGGKGGARPQGDGNRSGGRRPSPAMMPSHPNPASMPSKAAGSGGGGRGRGGRGGGPGHGGPGHGGFRGRGGRRGGTAGAFGRPGGAPRRGKKSKRQKRHEFEEQQKHEVGGVRLPDGGGKVVRLRRGASLADFAEKIGADPAALVQALFNLGEMVTATASVSEDTLQLLGSEINYEVQVVSPEDEDRELLESFDLQFGEDEGGEEALEKRPPVVTVMGHVDHGKTRLLDTIRKTNEGAGEAGGITQGIGAYQTTVDLEDGPRTITFLDTPGHEAFTAMRARGAKSTDLAILVVAADDGVMPQTIEAINHAKAADIPVVVAVNKIDKPEASPDKIRGQLTEYGLVPEEYGGDTMFVDISAKNNINIDDLLEAVILTADAALELTANPDMDAQGSAIEAHLDRGRGPVATVIIQRGTLRIGDSIVVGDAHGRVRRMLDEFGNDVEEAGPSRPVQVQGLNGVPGAGDNLLVVEDDRVARQIAAQRDARKRSALQAKARKRVSLEDLDAVLKETSTLNLILKGDNAGSVEALEDALLDIEVDDEVQLNIIDRGVGAVTQTNVSLAAASDAIIIAFNVRAEGKATEEANAEGVDIRYYTVIYRAIEEVEAALKGMLKPIYEERDTGAAEIRALFKSSAVGTIAGCMVTEGKVKRNGKVRLVRDGNVITSDAKIESLRHEKDDANEINAGYECGMVLSYPDIQVGDIIQAYEEVEVPRD.

Residues 50-62 (HYEAKGGEDKAAE) show a composition bias toward basic and acidic residues. Positions 50 to 306 (HYEAKGGEDK…QKHEVGGVRL (257 aa)) are disordered. Positions 63–75 (KNAPAATPASASK) are enriched in low complexity. The span at 89–125 (GPKPSAAPKPGAAPKPGGAPKPGGAPKPGATPKPGGA) shows a compositional bias: pro residues. A compositionally biased stretch (low complexity) spans 161-171 (PFSTGSSSDRP). Over residues 233 to 276 (GSGGGGRGRGGRGGGPGHGGPGHGGFRGRGGRRGGTAGAFGRPG) the composition is skewed to gly residues. Basic residues predominate over residues 280–290 (RRGKKSKRQKR). Over residues 291 to 302 (HEFEEQQKHEVG) the composition is skewed to basic and acidic residues. The 175-residue stretch at 401–575 (KRPPVVTVMG…LTADAALELT (175 aa)) folds into the tr-type G domain. A G1 region spans residues 410–417 (GHVDHGKT). 410–417 (GHVDHGKT) is a GTP binding site. The G2 stretch occupies residues 435 to 439 (GITQG). Positions 460–463 (DTPG) are G3. Residues 460–464 (DTPGH) and 514–517 (NKID) contribute to the GTP site. A G4 region spans residues 514-517 (NKID). The G5 stretch occupies residues 550-552 (SAK).

The protein belongs to the TRAFAC class translation factor GTPase superfamily. Classic translation factor GTPase family. IF-2 subfamily.

The protein resides in the cytoplasm. Functionally, one of the essential components for the initiation of protein synthesis. Protects formylmethionyl-tRNA from spontaneous hydrolysis and promotes its binding to the 30S ribosomal subunits. Also involved in the hydrolysis of GTP during the formation of the 70S ribosomal complex. This Corynebacterium aurimucosum (strain ATCC 700975 / DSM 44827 / CIP 107346 / CN-1) (Corynebacterium nigricans) protein is Translation initiation factor IF-2.